Consider the following 155-residue polypeptide: Small ribosomal subunit protein uS7cz/uS7cy (155 aa).

Belongs to the universal ribosomal protein uS7 family. As to quaternary structure, part of the 30S ribosomal subunit.

It is found in the plastid. The protein resides in the chloroplast. Functionally, one of the primary rRNA binding proteins, it binds directly to 16S rRNA where it nucleates assembly of the head domain of the 30S subunit. The protein is Small ribosomal subunit protein uS7cz/uS7cy (rps7-A) of Acorus calamus var. americanus (American sweet flag).